Consider the following 1203-residue polypeptide: Serine/threonine-protein kinase Nek1 (1203 aa).

Positions 4-258 (YVRLQKIGEG…VNSILEKGFI (255 aa)) constitute a Protein kinase domain. ATP-binding positions include 10–18 (IGEGSFGKA) and Lys-33. The active-site Proton acceptor is Asp-128. Thr-156 bears the Phosphothreonine mark. Thr-162 bears the Phosphothreonine; by autocatalysis mark. The segment at 329-357 (LLEKKPPPKHKQAHQIPVKKMNSGEERKK) is disordered. Phosphoserine occurs at positions 417 and 437. Thr-615 is subject to Phosphothreonine. The residue at position 618 (Ser-618) is a Phosphoserine. Disordered regions lie at residues 643-662 (LTDT…SSKR) and 674-708 (AQED…ISSD). Over residues 674-683 (AQEDEKEKQH) the composition is skewed to basic and acidic residues. 4 positions are modified to phosphoserine: Ser-750, Ser-786, Ser-820, and Ser-832. Disordered regions lie at residues 814–866 (PSAT…LPPV) and 888–925 (AVQQ…GCDV). The span at 839–850 (NVEEPDDLETEV) shows a compositional bias: acidic residues. Ser-997 carries the phosphoserine modification. 2 disordered regions span residues 1021–1045 (SLEI…TVFE) and 1063–1120 (REQP…ETTS). Ser-1071 carries the post-translational modification Phosphoserine.

This sequence belongs to the protein kinase superfamily. NEK Ser/Thr protein kinase family. NIMA subfamily. As to quaternary structure, binds to CBY2. Found in a complex with CFAP410, NEK1 and SPATA7. Interacts with CFAP410. Interacts (via Ser-997 phosphorylated form) with 14-3-3 proteins. The cofactor is Mg(2+). As to expression, predominantly in testes (germ cells and Sertoli cells). Lower levels in ovary (oocytes and granulosa cells), thymus and lung.

The protein localises to the nucleus. It is found in the cytoplasm. Its subcellular location is the cytoskeleton. The protein resides in the microtubule organizing center. It localises to the centrosome. The enzyme catalyses L-seryl-[protein] + ATP = O-phospho-L-seryl-[protein] + ADP + H(+). It carries out the reaction L-threonyl-[protein] + ATP = O-phospho-L-threonyl-[protein] + ADP + H(+). Phosphorylates serines and threonines, but also appears to possess tyrosine kinase activity. Involved in DNA damage checkpoint control and for proper DNA damage repair. In response to injury that includes DNA damage, NEK1 phosphorylates VDAC1 to limit mitochondrial cell death. May be implicated in the control of meiosis. Involved in cilium assembly. This is Serine/threonine-protein kinase Nek1 (Nek1) from Mus musculus (Mouse).